Consider the following 2542-residue polypeptide: Talin-2 (2542 aa).

In terms of domain architecture, FERM spans 88–406 (RPQKIRMLDG…GYIDIILKKK (319 aa)). The interaction with PIP5K1C stretch occupies residues 312–406 (GVSFFLVKEK…GYIDIILKKK (95 aa)). 4 positions are modified to phosphoserine: serine 428, serine 449, serine 623, and serine 1023. Residue tyrosine 1665 is modified to Phosphotyrosine. Threonine 1843 carries the post-translational modification Phosphothreonine. The I/LWEQ domain maps to 2294-2533 (TEWVDPEDPT…QIRQQQYKFL (240 aa)).

As to quaternary structure, interacts directly with PIP5K1C.

The protein localises to the cytoplasm. Its subcellular location is the cell junction. The protein resides in the focal adhesion. It is found in the synapse. It localises to the cell membrane. The protein localises to the cytoskeleton. In terms of biological role, as a major component of focal adhesion plaques that links integrin to the actin cytoskeleton, may play an important role in cell adhesion. Recruits PIP5K1C to focal adhesion plaques and strongly activates its kinase activity. In Homo sapiens (Human), this protein is Talin-2 (TLN2).